The primary structure comprises 446 residues: Tryptophan dimethylallyltransferase (446 aa).

L-tryptophan-binding positions include 83–84 (IL) and E92. 3 residues coordinate substrate: R103, K189, and Y191. L-tryptophan contacts are provided by Y193 and R246. Substrate-binding residues include R259, K261, Y263, Q345, and Y347.

This sequence belongs to the tryptophan dimethylallyltransferase family. Homodimer.

It catalyses the reaction L-tryptophan + dimethylallyl diphosphate = 4-(3-methylbut-2-enyl)-L-tryptophan + diphosphate. The protein operates within alkaloid biosynthesis; ergot alkaloid biosynthesis. In terms of biological role, tryptophan dimethylallyltransferase; part of the gene cluster that mediates the biosynthesis of fungal ergot alkaloid. DmaW catalyzes the first step of ergot alkaloid biosynthesis by condensing dimethylallyl diphosphate (DMAP) and tryptophan to form 4-dimethylallyl-L-tryptophan. The second step is catalyzed by the methyltransferase easF that methylates 4-dimethylallyl-L-tryptophan in the presence of S-adenosyl-L-methionine, resulting in the formation of 4-dimethylallyl-L-abrine. The catalase easC and the FAD-dependent oxidoreductase easE then transform 4-dimethylallyl-L-abrine to chanoclavine-I which is further oxidized by easD in the presence of NAD(+), resulting in the formation of chanoclavine-I aldehyde. Chanoclavine-I aldehyde is the precursor of ergoamides and ergopeptines in Clavicipitaceae, and clavine-type alcaloids such as fumiclavine in Trichocomaceae. However, the metabolites downstream of chanoclavine-I aldehyde in Arthrodermataceae have not been identified yet. This chain is Tryptophan dimethylallyltransferase, found in Arthroderma otae (strain ATCC MYA-4605 / CBS 113480) (Microsporum canis).